Reading from the N-terminus, the 862-residue chain is Protein translocase subunit SecA (862 aa).

Residues Gln-86, 104–108 (GEGKT), and Asp-499 contribute to the ATP site. 4 residues coordinate Zn(2+): Cys-848, Cys-850, Cys-859, and His-860.

It belongs to the SecA family. Monomer and homodimer. Part of the essential Sec protein translocation apparatus which comprises SecA, SecYEG and auxiliary proteins SecDF-YajC and YidC. Zn(2+) is required as a cofactor.

It localises to the cell inner membrane. It is found in the cytoplasm. The enzyme catalyses ATP + H2O + cellular proteinSide 1 = ADP + phosphate + cellular proteinSide 2.. Functionally, part of the Sec protein translocase complex. Interacts with the SecYEG preprotein conducting channel. Has a central role in coupling the hydrolysis of ATP to the transfer of proteins into and across the cell membrane, serving both as a receptor for the preprotein-SecB complex and as an ATP-driven molecular motor driving the stepwise translocation of polypeptide chains across the membrane. The sequence is that of Protein translocase subunit SecA from Ehrlichia chaffeensis (strain ATCC CRL-10679 / Arkansas).